The primary structure comprises 454 residues: Protein disulfide-isomerase TMX3 (454 aa).

The signal sequence occupies residues 1–24 (MAAWKSWTALRLCATVVVLDMVVC). One can recognise a Thioredoxin domain in the interval 25–128 (KGFVEDLDES…KDDIIEFAHR (104 aa)). Residues 25–375 (KGFVEDLDES…TIVSIFKSSP (351 aa)) are Lumenal-facing. Residues C53 and C56 each act as nucleophile in the active site. A disulfide bridge connects residues C53 and C56. N-linked (GlcNAc...) asparagine glycosylation is found at N258 and N313. The chain crosses the membrane as a helical span at residues 376–396 (LMGCFLFGLPLGVISIMCYGI). Over 397 to 454 (YTADTDGGYIEERYEVSKSENENQEQIEESKEQQEPSSGGSVVPTVQEPKDVLEKKKD) the chain is Cytoplasmic. Residues 412-454 (VSKSENENQEQIEESKEQQEPSSGGSVVPTVQEPKDVLEKKKD) form a disordered region. Residues 444–454 (EPKDVLEKKKD) are compositionally biased toward basic and acidic residues. A Di-lysine motif motif is present at residues 451–454 (KKKD).

It belongs to the protein disulfide isomerase family. N-glycosylated. Widely expressed. Expressed in brain, testis, lung, skin, kidney, uterus, bone, stomach, liver, prostate, placenta, eye and muscle.

The protein localises to the endoplasmic reticulum membrane. The catalysed reaction is Catalyzes the rearrangement of -S-S- bonds in proteins.. Its function is as follows. Probable disulfide isomerase, which participates in the folding of proteins containing disulfide bonds. May act as a dithiol oxidase. Acts as a regulator of endoplasmic reticulum-mitochondria contact sites via its ability to regulate redox signals. The chain is Protein disulfide-isomerase TMX3 (TMX3) from Homo sapiens (Human).